The chain runs to 65 residues: Large ribosomal subunit protein bL35 (65 aa).

This sequence belongs to the bacterial ribosomal protein bL35 family.

This Prochlorococcus marinus (strain NATL1A) protein is Large ribosomal subunit protein bL35.